The following is a 251-amino-acid chain: uncharacterized protein (251 aa).

The tract at residues 229-251 (TSTETSPEHQADLKDDNSDISST) is disordered. Positions 234 to 245 (SPEHQADLKDDN) are enriched in basic and acidic residues.

This is an uncharacterized protein from Acanthamoeba polyphaga (Amoeba).